Here is a 90-residue protein sequence, read N- to C-terminus: Cell division topological specificity factor (90 aa).

This sequence belongs to the MinE family.

Functionally, prevents the cell division inhibition by proteins MinC and MinD at internal division sites while permitting inhibition at polar sites. This ensures cell division at the proper site by restricting the formation of a division septum at the midpoint of the long axis of the cell. This chain is Cell division topological specificity factor, found in Clostridium perfringens (strain SM101 / Type A).